Consider the following 378-residue polypeptide: Lipoyl synthase, mitochondrial (378 aa).

Positions 97, 102, 108, 128, 132, 135, and 343 each coordinate [4Fe-4S] cluster. Residues 111–332 enclose the Radical SAM core domain; that stretch reads GSDKSAATAT…RQRALDMGFL (222 aa).

Belongs to the radical SAM superfamily. Lipoyl synthase family. [4Fe-4S] cluster is required as a cofactor.

Its subcellular location is the mitochondrion. The enzyme catalyses [[Fe-S] cluster scaffold protein carrying a second [4Fe-4S](2+) cluster] + N(6)-octanoyl-L-lysyl-[protein] + 2 oxidized [2Fe-2S]-[ferredoxin] + 2 S-adenosyl-L-methionine + 4 H(+) = [[Fe-S] cluster scaffold protein] + N(6)-[(R)-dihydrolipoyl]-L-lysyl-[protein] + 4 Fe(3+) + 2 hydrogen sulfide + 2 5'-deoxyadenosine + 2 L-methionine + 2 reduced [2Fe-2S]-[ferredoxin]. Its pathway is protein modification; protein lipoylation via endogenous pathway; protein N(6)-(lipoyl)lysine from octanoyl-[acyl-carrier-protein]: step 2/2. Functionally, catalyzes the radical-mediated insertion of two sulfur atoms into the C-6 and C-8 positions of the octanoyl moiety bound to the lipoyl domains of lipoate-dependent enzymes, thereby converting the octanoylated domains into lipoylated derivatives. This Phaeosphaeria nodorum (strain SN15 / ATCC MYA-4574 / FGSC 10173) (Glume blotch fungus) protein is Lipoyl synthase, mitochondrial.